A 150-amino-acid polypeptide reads, in one-letter code: Protein ADM2 (150 aa).

The signal sequence occupies residues 1-25 (MAQLLMVTVTLGCISLLYLLPGTLS). Positions 26-100 (GSLGKGLRHS…HPGPQRPTGS (75 aa)) are excised as a propeptide. Residues 28 to 102 (LGKGLRHSRP…GPQRPTGSRR (75 aa)) are disordered. A disulfide bridge connects residues Cys112 and Cys117. Tyr149 bears the Tyrosine amide mark.

This sequence belongs to the adrenomedullin family. As to expression, high expression detected in the submaxillary gland, kidney, stomach, and mesentery, followed by the pituitary, lung, pancreas, intestines, spleen, thymus and ovary. Expressed mainly in the intermediate lobe of the pituitary, with sporadic in the anterior lobe.

It localises to the secreted. Functionally, intermedin/ADM2 is a peptide hormone that plays a role as physiological regulator of gastrointestinal and cardiovascular bioactivities mediated by the CALCRL-RAMPs receptor complexes. Activates the cAMP-dependent pathway through interaction with CALCRL-RAMP3 receptor complex. The protein is Protein ADM2 of Mus musculus (Mouse).